The chain runs to 893 residues: UPF0182 protein CLB_0018 (893 aa).

7 helical membrane-spanning segments follow: residues 9–29 (IPLF…NFII), 49–69 (AIII…WMYY), 94–114 (LFFI…SSSY), 154–174 (VIIS…FILE), 202–222 (LAIV…IKIW), 246–266 (FYKI…LSIV), and 273–293 (VSIC…ASFL).

Belongs to the UPF0182 family.

The protein localises to the cell membrane. This chain is UPF0182 protein CLB_0018, found in Clostridium botulinum (strain ATCC 19397 / Type A).